We begin with the raw amino-acid sequence, 511 residues long: Zinc finger CCCH-type with G patch domain-containing protein (511 aa).

Residues 157-180 (PCSYYLEGECRFDEARCRYSHGAL) form a C3H1-type zinc finger. Residues 254–281 (DQEDELTSEDSSSVNDGSSDEEESDMDD) form a disordered region. Residues 271 to 281 (SSDEEESDMDD) show a composition bias toward acidic residues. In terms of domain architecture, G-patch spans 311-357 (TRGIGSKLMEKMGYIHGTGLGSDGRGIVTPVSAQILPKGRSLDACME). Disordered regions lie at residues 409-433 (GSDN…QHST) and 478-511 (MHNQ…MFEF). Residues 414–425 (QQAEPEAKKAKA) are compositionally biased toward basic and acidic residues. A compositionally biased stretch (polar residues) spans 478–493 (MHNQKQELATLQAQER). Over residues 494–511 (SLSKEQQTRKSKNKMFEF) the composition is skewed to basic and acidic residues.

It is found in the nucleus. Its function is as follows. Transcription repressor. This is Zinc finger CCCH-type with G patch domain-containing protein from Drosophila ananassae (Fruit fly).